Here is a 71-residue protein sequence, read N- to C-terminus: Protein KleB (71 aa).

Positions I9–I28 form a DNA-binding region, H-T-H motif.

This chain is Protein KleB (kleB), found in Escherichia coli.